Consider the following 695-residue polypeptide: Probable Rho-GTPase-activating protein 7 (695 aa).

Residues 1–11 (MLSAPSSSTTP) show a composition bias toward low complexity. Positions 1–26 (MLSAPSSSTTPASPPTSPPNTTSSDD) are disordered. The F-BAR domain maps to 33-307 (PKVEAILNSE…ALDNINANTD (275 aa)). The tract at residues 320–499 (EDNKNPTDAS…SVSPQPSSPT (180 aa)) is disordered. Polar residues-rich tracts occupy residues 336–348 (PPSS…SAGK) and 366–382 (PLQN…NPSV). 3 stretches are compositionally biased toward low complexity: residues 383-432 (ASPA…RTSS), 458-467 (PIQTTTIQTS), and 488-499 (PTSVSPQPSSPT). Residues Ser-496 and Ser-497 each carry the phosphoserine modification. Positions 506–692 (ARLDAIILRE…ILIDYCFTIF (187 aa)) constitute a Rho-GAP domain.

This chain is Probable Rho-GTPase-activating protein 7 (rga7), found in Schizosaccharomyces pombe (strain 972 / ATCC 24843) (Fission yeast).